The chain runs to 395 residues: Zinc-regulated GTPase metalloprotein activator 1A (395 aa).

Positions methionine 1–leucine 22 are disordered. A compositionally biased stretch (acidic residues) spans alanine 8–proline 20. A psi-PxLVp motif motif is present at residues glutamate 17 to proline 24. Glycine 49–threonine 56 is a GTP binding site. Residues cysteine 107, cysteine 109, and cysteine 110 each coordinate Zn(2+). The CXCC motif motif lies at cysteine 107–cysteine 110. Residues cysteine 110–aspartate 114 and asparagine 203–aspartate 206 contribute to the GTP site. The 104-residue stretch at isoleucine 274–valine 377 folds into the CobW C-terminal domain.

It belongs to the SIMIBI class G3E GTPase family. ZNG1 subfamily. Ubiquitously expressed. Up-regulated in cultured astrocytes treated with dopamine.

It localises to the nucleus. The catalysed reaction is GTP + H2O = GDP + phosphate + H(+). Its function is as follows. Zinc chaperone that directly transfers zinc cofactor to target metalloproteins, thereby activating them. Catalyzes zinc insertion into the active site of methionine aminopeptidase METAP1, which function to cleave the initiator methionine from polypeptides during or after protein translation. Mechanistically, the N-terminal psi-PxLVp motif binds to the C6H2-type zinc finger of inactive form of METAP1. After formation of the docked complex, zinc is transferred from the CXCC motif in the GTPase domain of ZNG1A to the zinc binding site in the peptidase domain of METAP1 in a process requiring GTP hydrolysis. GTP/GDP exchange is required for release of active METAP1. The sequence is that of Zinc-regulated GTPase metalloprotein activator 1A from Homo sapiens (Human).